We begin with the raw amino-acid sequence, 185 residues long: ATP-dependent protease subunit HslV (185 aa).

Thr-12 is a catalytic residue. Na(+) is bound by residues Ala-168, Cys-171, and Thr-174.

The protein belongs to the peptidase T1B family. HslV subfamily. As to quaternary structure, a double ring-shaped homohexamer of HslV is capped on each side by a ring-shaped HslU homohexamer. The assembly of the HslU/HslV complex is dependent on binding of ATP.

Its subcellular location is the cytoplasm. It catalyses the reaction ATP-dependent cleavage of peptide bonds with broad specificity.. Allosterically activated by HslU binding. Its function is as follows. Protease subunit of a proteasome-like degradation complex believed to be a general protein degrading machinery. The chain is ATP-dependent protease subunit HslV from Cereibacter sphaeroides (strain ATCC 17023 / DSM 158 / JCM 6121 / CCUG 31486 / LMG 2827 / NBRC 12203 / NCIMB 8253 / ATH 2.4.1.) (Rhodobacter sphaeroides).